Here is a 514-residue protein sequence, read N- to C-terminus: M-phase inducer phosphatase 1 (514 aa).

The Phosphodegron motif lies at 73 to 83; it reads MGSSESTDSGF. Ser-75 is modified (phosphoserine; by CHEK1). Residues Ser-78, Ser-81, and Ser-87 each carry the phosphoserine; by NEK11 modification. Ser-106 carries the post-translational modification Phosphoserine. Ser-123 carries the post-translational modification Phosphoserine; by CHEK1 and CHEK2. Residues 140–142 carry the KEN box motif; the sequence is KEN. At Ser-172 the chain carries Phosphoserine; by CHEK1. The tract at residues 256-308 is disordered; the sequence is PCGSSTRAVLKRADRSHEEPPRGTKRRKSVPSPVKAKADVPEPAQLPSQSLSL. Over residues 266–277 the composition is skewed to basic and acidic residues; sequence KRADRSHEEPPR. 2 positions are modified to phosphoserine; by CHEK1 and CHEK2: Ser-271 and Ser-284. Phosphoserine is present on Ser-311. The region spanning 366–472 is the Rhodanese domain; that stretch reads LIKEFVIIDC…FFLKCQSHCE (107 aa). Residue Cys-421 is part of the active site. Phosphothreonine; by CHEK1 is present on Thr-497. Residues Ser-503 and Ser-509 each carry the phosphoserine; by PLK3 modification.

This sequence belongs to the MPI phosphatase family. Interacts with CCNB1/cyclin B1. Interacts with YWHAE/14-3-3 epsilon when phosphorylated. Interacts with CUL1 specifically when CUL1 is neddylated and active. Interacts with BTRC/BTRCP1 and FBXW11/BTRCP2. Interactions with CUL1, BTRC and FBXW11 are enhanced upon DNA damage. Interacts with CHEK2; mediates CDC25A phosphorylation and degradation in response to infrared-induced DNA damages. Interacts with HSP90AB1; prevents heat shock-mediated CDC25A degradation and contributes to cell cycle progression. Phosphorylated by CHEK1 on Ser-75, Ser-123, Ser-172, Ser-271, Ser-284 and Thr-497 during checkpoint mediated cell cycle arrest. Also phosphorylated by CHEK2 on Ser-123, Ser-271, and Ser-284 during checkpoint mediated cell cycle arrest. Phosphorylation on Ser-172 and Thr-497 creates binding sites for YWHAE/14-3-3 epsilon which inhibits CDC25A. Phosphorylation on Ser-75, Ser-123, Ser-172, Ser-271 and Ser-284 may also promote ubiquitin-dependent proteolysis of CDC25A by the SCF complex. Phosphorylation of CDC25A at Ser-75 by CHEK1 primes it for subsequent phosphorylation at Ser-75, Ser-81 and Ser-87 by NEK11. Phosphorylation by NEK11 is required for BTRC-mediated polyubiquitination and degradation. Phosphorylation by PIM1 leads to an increase in phosphatase activity. Phosphorylated by PLK3 following DNA damage, leading to promote its ubiquitination and degradation. Post-translationally, ubiquitinated by the anaphase promoting complex/cyclosome (APC/C) ubiquitin ligase complex that contains FZR1/CDH1 during G1 phase leading to its degradation by the proteasome. Ubiquitinated by a SCF complex containing BTRC and FBXW11 during S phase leading to its degradation by the proteasome. Deubiquitination by USP17L2/DUB3 leads to its stabilization. Ubiquitously expressed in most developing tissue. High levels in the testis and lower levels in the ovary, particularly in germ cells. Lower levels also in kidney, liver, heart and muscle.

The catalysed reaction is O-phospho-L-tyrosyl-[protein] + H2O = L-tyrosyl-[protein] + phosphate. Its activity is regulated as follows. Stimulated by B-type cyclins. Stimulated by PIM1-mediated phosphorylation. In terms of biological role, tyrosine protein phosphatase which functions as a dosage-dependent inducer of mitotic progression. Directly dephosphorylates CDK1 and stimulates its kinase activity. Also dephosphorylates CDK2 in complex with cyclin-E, in vitro. The chain is M-phase inducer phosphatase 1 (Cdc25a) from Mus musculus (Mouse).